Reading from the N-terminus, the 469-residue chain is Glutamate--tRNA ligase (469 aa).

Positions 11–21 (PSPTGFIHLGN) match the 'HIGH' region motif. The short motif at 243–247 (KMSKR) is the 'KMSKS' region element. ATP is bound at residue lysine 246.

It belongs to the class-I aminoacyl-tRNA synthetase family. Glutamate--tRNA ligase type 1 subfamily. Monomer.

The protein resides in the cytoplasm. The catalysed reaction is tRNA(Glu) + L-glutamate + ATP = L-glutamyl-tRNA(Glu) + AMP + diphosphate. Functionally, catalyzes the attachment of glutamate to tRNA(Glu) in a two-step reaction: glutamate is first activated by ATP to form Glu-AMP and then transferred to the acceptor end of tRNA(Glu). In Burkholderia cenocepacia (strain ATCC BAA-245 / DSM 16553 / LMG 16656 / NCTC 13227 / J2315 / CF5610) (Burkholderia cepacia (strain J2315)), this protein is Glutamate--tRNA ligase.